A 300-amino-acid polypeptide reads, in one-letter code: Cation-efflux pump FieF (300 aa).

4 helical membrane-spanning segments follow: residues 11–31, 40–60, 81–101, and 114–134; these read LAAVSATAVALVLFIMKVFAW, LASLVDSLVDIAASLVNLLVV, LAALAQSMFISGSALFLILTG, and PEVGMWVTLIALVATLLLVSF. The Zn(2+) site is built by aspartate 45 and aspartate 49. Zn(2+) contacts are provided by histidine 153 and aspartate 157. The next 2 membrane-spanning stretches (helical) occupy residues 156–176 and 182–202; these read SDLLMNGAILVALALSWKGIT and FALGIGGYILYSALRMGYDAV.

This sequence belongs to the cation diffusion facilitator (CDF) transporter (TC 2.A.4) family. FieF subfamily. In terms of assembly, homodimer.

It is found in the cell inner membrane. The catalysed reaction is Zn(2+)(in) + H(+)(out) = Zn(2+)(out) + H(+)(in). It carries out the reaction Cd(2+)(in) + H(+)(out) = Cd(2+)(out) + H(+)(in). The enzyme catalyses Fe(2+)(in) + H(+)(out) = Fe(2+)(out) + H(+)(in). Functionally, divalent metal cation transporter which exports Zn(2+), Cd(2+) and possibly Fe(2+). May be involved in zinc and iron detoxification by efflux. This is Cation-efflux pump FieF from Pectobacterium carotovorum subsp. carotovorum (strain PC1).